The following is a 293-amino-acid chain: MDTELLKTFLEVSRTRHFGRAAESLYLTQSAVSFRIRQLENQLGANLFTRHRNNIRLTPAGERLVPYAEMLLNTWRLAKKEVIHSLQHTELSIGATASLWEAYLTPWLQQLYEQQEELRLEARIALRNSLVKQLHERQLDLLITTEPPKMDELACLLLGHFSLRLYSSFSLDLPKEDDTPNEHKNASEVPYIKLEWGADFHQQENRLLDSEQAPILTTTSAHLTRQLLETTGGCAFLPEHWQKEYPQLVIHPDIPPIVRPLYAVWLQNSDQQALIRQLLKTPMNNATQSVTRE.

The HTH lysR-type domain occupies 1-58; that stretch reads MDTELLKTFLEVSRTRHFGRAAESLYLTQSAVSFRIRQLENQLGANLFTRHRNNIRLT. The segment at residues 18 to 37 is a DNA-binding region (H-T-H motif); sequence FGRAAESLYLTQSAVSFRIR.

Belongs to the LysR transcriptional regulatory family.

Its function is as follows. Negatively regulates the transcription of the flagellar master operon flhDC by binding to the upstream region of the operon. The chain is HTH-type transcriptional regulator HdfR from Yersinia pseudotuberculosis serotype O:1b (strain IP 31758).